The sequence spans 138 residues: Transcription antitermination protein NusB (138 aa).

Belongs to the NusB family.

Involved in transcription antitermination. Required for transcription of ribosomal RNA (rRNA) genes. Binds specifically to the boxA antiterminator sequence of the ribosomal RNA (rrn) operons. The chain is Transcription antitermination protein NusB from Coxiella burnetii (strain CbuK_Q154) (Coxiella burnetii (strain Q154)).